Consider the following 482-residue polypeptide: Putative ankyrin repeat protein FPV232 (482 aa).

9 ANK repeats span residues 36-65 (IPLI…NVNE), 69-100 (RYLT…DLSS), 101-128 (YEER…DGNR), 129-161 (TIDD…DTKI), 166-195 (KLKT…EVNS), 199-228 (GNNS…NTDH), 232-265 (CGTT…SVNI), 270-297 (LGFT…DPNI), and 301-332 (EKET…LRAF).

This chain is Putative ankyrin repeat protein FPV232, found in Fowlpox virus (strain NVSL) (FPV).